Consider the following 97-residue polypeptide: Essential MCU regulator, mitochondrial (97 aa).

A mitochondrion-targeting transit peptide spans 1–37 (MAARMGVLSVAGFRAAARAGGLLARPKQSTAVVPCRT). Topologically, residues 38–55 (VIASSAGAILPKPEKVSF) are mitochondrial matrix. The chain crosses the membrane as a helical span at residues 56–75 (GLLRVFTVVIPFLYIGTLIS). Over 76–97 (KNFAAVLEEHDIFVPEDDDDDD) the chain is Mitochondrial intermembrane.

Belongs to the SMDT1/EMRE family. As to quaternary structure, component of the uniplex complex.

It localises to the mitochondrion inner membrane. Functionally, essential regulatory subunit of the mitochondrial calcium uniporter complex (uniplex), a complex that mediates calcium uptake into mitochondria. Required to bridge the calcium-sensing proteins micu1 with the calcium-conducting subunit mcu. Acts by mediating activation of mcu and retention of micu1 to the mcu pore, in order to ensure tight regulation of the uniplex complex and appropriate responses to intracellular calcium signaling. This is Essential MCU regulator, mitochondrial from Xenopus laevis (African clawed frog).